Reading from the N-terminus, the 318-residue chain is DNA repair nuclease/redox regulator APEX1 (318 aa).

The interval methionine 1–asparagine 33 is necessary for interaction with YBX1, binding to RNA, association together with NPM1 to rRNA, endoribonuclease activity on abasic RNA and localization in the nucleoli. The disordered stretch occupies residues methionine 1–alanine 60. An N6-acetyllysine; by EP300 mark is found at lysine 6 and lysine 7. Residues glycine 8–aspartate 13 carry the Nuclear localization signal (NLS) motif. Over residues glutamate 16 to alanine 38 the composition is skewed to basic and acidic residues. The segment at alanine 23–asparagine 33 is necessary for interaction with NPM1 and for efficient rRNA binding. Residues lysine 27, lysine 31, lysine 32, and lysine 35 each carry the N6-acetyllysine modification. Serine 54 is modified (phosphoserine). Residues isoleucine 64–glycine 80 carry the Nuclear export signal (NES) motif. Cysteine 65 is subject to S-nitrosocysteine; alternate. A disulfide bridge links cysteine 65 with cysteine 93. Mg(2+) is bound at residue aspartate 70. An S-nitrosocysteine; alternate modification is found at cysteine 93. Glutamate 96 provides a ligand contact to Mg(2+). The active site involves tyrosine 171. Lysine 197 is modified (N6-acetyllysine). 2 residues coordinate Mg(2+): aspartate 210 and asparagine 212. Aspartate 210 acts as the Proton donor/acceptor in catalysis. Threonine 233 is modified (phosphothreonine; by CDK5). A mitochondrial targeting sequence (MTS) region spans residues histidine 289–leucine 318. Aspartate 308 provides a ligand contact to Mg(2+). Position 310 is an S-nitrosocysteine (cysteine 310).

This sequence belongs to the DNA repair enzymes AP/ExoA family. Monomer. Homodimer; disulfide-linked. Component of the SET complex, composed of at least APEX1, SET, ANP32A, HMGB2, NME1 and TREX1. Associates with the dimer XRCC5/XRCC6 in a DNA-dependent manner. Interacts with SIRT1; the interaction is increased in the context of genotoxic stress. Interacts with HDAC1, HDAC2 and HDAC3; the interactions are not dependent on the APEX1 acetylation status. Interacts with XRCC1; the interaction is induced by SIRT1 and increased with the APEX1 acetylated form. Interacts with NPM1 (via N-terminal domain); the interaction is RNA-dependent and decreases in hydrogen peroxide-damaged cells. Interacts (via N-terminus) with YBX1 (via C-terminus); the interaction is increased in presence of APEX1 acetylated at Lys-6 and Lys-7. Interacts with HNRNPL; the interaction is DNA-dependent. Interacts (via N-terminus) with KPNA1 and KPNA2. Interacts with TXN; the interaction stimulates the FOS/JUN AP-1 complex DNA-binding activity in a redox-dependent manner. Interacts with GZMA, KRT8, MDM2, POLB, PRDX6, PRPF19, RPLP0, TOMM20 and WDR77. Binds to CDK5. Mg(2+) is required as a cofactor. The cofactor is Mn(2+). Phosphorylated. Phosphorylation by kinase PKC or casein kinase CK2 results in enhanced redox activity that stimulates binding of the FOS/JUN AP-1 complex to its cognate binding site. AP-endodeoxyribonuclease activity is not affected by CK2-mediated phosphorylation. Phosphorylation of Thr-233 by CDK5 in response to MPP(+)/MPTP (1-methyl-4-phenylpyridinium) reduces AP-endodeoxyribonuclease activity resulting in accumulation of DNA damage and contributing to neuronal death. In terms of processing, acetylated on Lys-6 and Lys-7. Acetylation is increased by the transcriptional coactivator EP300 acetyltransferase, genotoxic agents like H(2)O(2) and methyl methanesulfonate (MMS). Acetylation increases its binding affinity to the negative calcium response element (nCaRE) DNA promoter. The acetylated form induces a stronger binding of YBX1 to the Y-box sequence in the MDR1 promoter than the unacetylated form. Deacetylated on lysines. Lys-6 and Lys-7 are deacetylated by SIRT1. Post-translationally, cleaved at Lys-31 by granzyme A to create the mitochondrial form; leading in reduction of binding to DNA, AP endodeoxyribonuclease activity, redox activation of transcription factors and to enhanced cell death. Cleaved by granzyme K; leading to intracellular ROS accumulation and enhanced cell death after oxidative stress. Cys-69 and Cys-93 are nitrosylated in response to nitric oxide (NO) and lead to the exposure of the nuclear export signal (NES). In terms of processing, ubiquitinated by MDM2; leading to translocation to the cytoplasm and proteasomal degradation.

Its subcellular location is the nucleus. It localises to the nucleolus. The protein resides in the nucleus speckle. The protein localises to the endoplasmic reticulum. It is found in the cytoplasm. Its subcellular location is the mitochondrion. The catalysed reaction is a deoxyribonucleotide-2'-deoxyribose-5'-monophosphate-DNA + H2O = a 5'-end 2'-deoxyribose-5'-monophosphate-DNA + a 3'-end 2'-deoxyribonucleotide-DNA + H(+). It catalyses the reaction Exonucleolytic cleavage in the 3'- to 5'-direction to yield nucleoside 5'-phosphates.. The enzyme catalyses a 3'-end 2'-deoxyribonucleotide-3'-phosphoglycolate-DNA + H2O = 2-phosphoglycolate + a 3'-end 2'-deoxyribonucleotide-DNA + H(+). It carries out the reaction a 3'-end 2'-deoxyribonucleotide-8-oxoguanine-DNA + H2O = 8-oxo-dGMP + a 3'-end 2'-deoxyribonucleotide-DNA + H(+). Its activity is regulated as follows. NPM1 stimulates endodeoxyribonuclease activity on double-stranded DNA with AP sites, but inhibits endoribonuclease activity on single-stranded RNA containing AP sites. Its function is as follows. Multifunctional protein that plays a central role in the cellular response to oxidative stress. The two major activities of APEX1 are DNA repair and redox regulation of transcriptional factors. Functions as an apurinic/apyrimidinic (AP) endodeoxyribonuclease in the base excision repair (BER) pathway of DNA lesions induced by oxidative and alkylating agents. Initiates repair of AP sites in DNA by catalyzing hydrolytic incision of the phosphodiester backbone immediately adjacent to the damage, generating a single-strand break with 5'-deoxyribose phosphate and 3'-hydroxyl ends. Also incises at AP sites in the DNA strand of DNA/RNA hybrids, single-stranded DNA regions of R-loop structures, and single-stranded RNA molecules. Operates at switch sites of immunoglobulin (Ig) constant regions where it mediates Ig isotype class switch recombination. Processes AP sites induced by successive action of AICDA and UNG. Generates staggered nicks in opposite DNA strands resulting in the formation of double-strand DNA breaks that are finally resolved via non-homologous end joining repair pathway. Has 3'-5' exodeoxyribonuclease activity on mismatched deoxyribonucleotides at the 3' termini of nicked or gapped DNA molecules during short-patch BER. Possesses DNA 3' phosphodiesterase activity capable of removing lesions (such as phosphoglycolate and 8-oxoguanine) blocking the 3' side of DNA strand breaks. Also acts as an endoribonuclease involved in the control of single-stranded RNA metabolism. Plays a role in regulating MYC mRNA turnover by preferentially cleaving in between UA and CA dinucleotides of the MYC coding region determinant (CRD). In association with NMD1, plays a role in the rRNA quality control process during cell cycle progression. Acts as a loading factor for POLB onto non-incised AP sites in DNA and stimulates the 5'-terminal deoxyribose 5'-phosphate (dRp) excision activity of POLB. Exerts reversible nuclear redox activity to regulate DNA binding affinity and transcriptional activity of transcriptional factors by controlling the redox status of their DNA-binding domain, such as the FOS/JUN AP-1 complex after exposure to IR. Involved in calcium-dependent down-regulation of parathyroid hormone (PTH) expression by binding to negative calcium response elements (nCaREs). Together with HNRNPL or the dimer XRCC5/XRCC6, associates with nCaRE, acting as an activator of transcriptional repression. May also play a role in the epigenetic regulation of gene expression by participating in DNA demethylation. Stimulates the YBX1-mediated MDR1 promoter activity, when acetylated at Lys-6 and Lys-7, leading to drug resistance. Plays a role in protection from granzyme-mediated cellular repair leading to cell death. Binds DNA and RNA. Associates, together with YBX1, on the MDR1 promoter. Together with NPM1, associates with rRNA. The polypeptide is DNA repair nuclease/redox regulator APEX1 (APEX1) (Pan paniscus (Pygmy chimpanzee)).